The following is a 1358-amino-acid chain: Probable aldehyde oxidase 1 (1358 aa).

Residues 4 to 91 (AAAVVAVNGE…HCAVTTSEGI (88 aa)) enclose the 2Fe-2S ferredoxin-type domain. Cys-43, Cys-48, Cys-51, and Cys-73 together coordinate [2Fe-2S] cluster. Residues 236 to 418 (AVTGDGCWFH…ISISIPDWCS (183 aa)) form the FAD-binding PCMH-type domain. Positions 540 to 567 (KPENANNVPNGSCTTNGTTNGSAESTVD) are disordered. Over residues 549–561 (NGSCTTNGTTNGS) the composition is skewed to low complexity.

The protein belongs to the xanthine dehydrogenase family. As to quaternary structure, aldehyde oxidases (AO) are homodimers and heterodimers of AO subunits. [2Fe-2S] cluster serves as cofactor. Requires FAD as cofactor. Mo-molybdopterin is required as a cofactor.

It carries out the reaction an aldehyde + O2 + H2O = a carboxylate + H2O2 + H(+). This is Probable aldehyde oxidase 1 from Oryza sativa subsp. japonica (Rice).